The following is a 235-amino-acid chain: Elongation factor Tu, chloroplastic (235 aa).

In terms of domain architecture, tr-type G spans 1-125 (KNMITGAAQM…SVDSYIPTPI (125 aa)). Residue 47–50 (NKED) coordinates GTP.

Belongs to the TRAFAC class translation factor GTPase superfamily. Classic translation factor GTPase family. EF-Tu/EF-1A subfamily.

It is found in the plastid. The protein resides in the chloroplast. It carries out the reaction GTP + H2O = GDP + phosphate + H(+). GTP hydrolase that promotes the GTP-dependent binding of aminoacyl-tRNA to the A-site of ribosomes during protein biosynthesis. The protein is Elongation factor Tu, chloroplastic (tufA) of Costaria costata (Five-ribbed kelp).